We begin with the raw amino-acid sequence, 449 residues long: Probable D-serine dehydratase (449 aa).

Position 119 is an N6-(pyridoxal phosphate)lysine (K119).

The protein belongs to the serine/threonine dehydratase family. DsdA subfamily. Pyridoxal 5'-phosphate is required as a cofactor.

The enzyme catalyses D-serine = pyruvate + NH4(+). This chain is Probable D-serine dehydratase, found in Pseudomonas putida (strain ATCC 700007 / DSM 6899 / JCM 31910 / BCRC 17059 / LMG 24140 / F1).